Reading from the N-terminus, the 795-residue chain is Oleate activated transcription factor 3 (795 aa).

A DNA-binding region (zn(2)-C6 fungal-type) is located at residues 14-43; sequence CSNCKRRKSRCDRGKPACGNCIRLGNRETC.

The protein belongs to the OAF3 family.

The protein localises to the cytoplasm. It is found in the nucleus. Its subcellular location is the mitochondrion. Transcriptional inhibitor with a significantly increased number of target genes in response to oleate. The polypeptide is Oleate activated transcription factor 3 (OAF3) (Eremothecium gossypii (strain ATCC 10895 / CBS 109.51 / FGSC 9923 / NRRL Y-1056) (Yeast)).